We begin with the raw amino-acid sequence, 561 residues long: MNINVADLLNGNYILLLFVVLALGLCLGKLRLGSIQLGNSIGVLVVSLLLGQQHFSINTDALNLGFMLFIFCVGVEAGPNFFSIFFRDGKNYLMLALVMVGSALLIALGLGKLFGWDIGLTAGMLAGSMTSTPVLVGAGDTLRHSGIASTQLSSALDNLSLGYALTYLIGLVSLIVGARYLPKLQHQDLQTSAQQIARERGLDTDANRKVYLPVIRAYRVGPELVAWTDGKNLRELGIYRQTGCYIERIRRNGILANPDGDAVLQMGDEIALVGYPDAHARLDPSFRNGKEVFDRDLLDMRIVTEEIVVKNHNAVGRRLAQLKLTDHGCFLNRVIRSQIEMPIDDNVVLNKGDVLQVSGDARRVKTIADRIGFISIHSQVTDLLAFCAFFIIGLMIGMITFQFSNFSFGIGNAAGLLFAGIMLGFLRANHPTFGYIPQGALNMVKEFGLMVFMAGVGLSAGSGISNGLGAVGGQMLIAGLVVSLAPVVICFLFGAYVLRMNRALLFGAMMGARTCAPAMEIISDTARSNIPALGYAGTYAIANVLLTLAGTLIVIIWPGLG.

The next 5 membrane-spanning stretches (helical) occupy residues 8–28 (LLNG…LCLG), 32–52 (LGSI…LLGQ), 66–86 (FMLF…SIFF), 94–114 (MLAL…GKLF), and 158–178 (NLSL…IVGA). RCK C-terminal domains are found at residues 200–288 (RGLD…SFRN) and 292–373 (VFDR…RIGF). The next 5 membrane-spanning stretches (helical) occupy residues 383–403 (LLAF…TFQF), 406–426 (FSFG…LGFL), 447–467 (FGLM…ISNG), 475–495 (MLIA…LFGA), and 540–560 (AIAN…WPGL).

The protein belongs to the AAE transporter (TC 2.A.81) family. YbjL subfamily.

The protein resides in the cell membrane. In Salmonella arizonae (strain ATCC BAA-731 / CDC346-86 / RSK2980), this protein is Putative transport protein YbjL.